Consider the following 451-residue polypeptide: Tubulin beta-4 chain (451 aa).

Residues Gln11, Glu69, Ser138, Gly142, Thr143, Gly144, Asn204, and Asn226 each coordinate GTP. Glu69 is a Mg(2+) binding site. Over residues 417-427 the composition is skewed to polar residues; that stretch reads DLVSEYQQYQD. Positions 417–451 are disordered; it reads DLVSEYQQYQDATAEEEGEYDEDDGGYGDEDDGMM. Positions 429 to 451 are enriched in acidic residues; that stretch reads TAEEEGEYDEDDGGYGDEDDGMM.

Belongs to the tubulin family. Dimer of alpha and beta chains. A typical microtubule is a hollow water-filled tube with an outer diameter of 25 nm and an inner diameter of 15 nM. Alpha-beta heterodimers associate head-to-tail to form protofilaments running lengthwise along the microtubule wall with the beta-tubulin subunit facing the microtubule plus end conferring a structural polarity. Microtubules usually have 13 protofilaments but different protofilament numbers can be found in some organisms and specialized cells. It depends on Mg(2+) as a cofactor.

The protein resides in the cytoplasm. It is found in the cytoskeleton. Tubulin is the major constituent of microtubules, a cylinder consisting of laterally associated linear protofilaments composed of alpha- and beta-tubulin heterodimers. Microtubules grow by the addition of GTP-tubulin dimers to the microtubule end, where a stabilizing cap forms. Below the cap, tubulin dimers are in GDP-bound state, owing to GTPase activity of alpha-tubulin. The sequence is that of Tubulin beta-4 chain (TUBB4) from Oomycete-like sp. (strain MacKay2000).